We begin with the raw amino-acid sequence, 105 residues long: Large ribosomal subunit protein bL21 (105 aa).

The protein belongs to the bacterial ribosomal protein bL21 family. Part of the 50S ribosomal subunit. Contacts protein L20.

Functionally, this protein binds to 23S rRNA in the presence of protein L20. In Desulfatibacillum aliphaticivorans, this protein is Large ribosomal subunit protein bL21.